The following is a 428-amino-acid chain: Gamma-glutamyl phosphate reductase (428 aa).

This sequence belongs to the gamma-glutamyl phosphate reductase family.

The protein resides in the cytoplasm. It catalyses the reaction L-glutamate 5-semialdehyde + phosphate + NADP(+) = L-glutamyl 5-phosphate + NADPH + H(+). The protein operates within amino-acid biosynthesis; L-proline biosynthesis; L-glutamate 5-semialdehyde from L-glutamate: step 2/2. Catalyzes the NADPH-dependent reduction of L-glutamate 5-phosphate into L-glutamate 5-semialdehyde and phosphate. The product spontaneously undergoes cyclization to form 1-pyrroline-5-carboxylate. The polypeptide is Gamma-glutamyl phosphate reductase (Streptomyces avermitilis (strain ATCC 31267 / DSM 46492 / JCM 5070 / NBRC 14893 / NCIMB 12804 / NRRL 8165 / MA-4680)).